The sequence spans 175 residues: Outer membrane protein assembly factor BamE (175 aa).

The signal sequence occupies residues 1–21 (MQNTKLLLTSFTFVGLLALAG). The N-palmitoyl cysteine moiety is linked to residue Cys-22. A lipid anchor (S-diacylglycerol cysteine) is attached at Cys-22. Disordered stretches follow at residues 117-147 (ALLG…KPGS) and 156-175 (IDNV…TSPQ).

It belongs to the BamE family. Part of the Bam complex.

Its subcellular location is the cell outer membrane. In terms of biological role, part of the outer membrane protein assembly complex, which is involved in assembly and insertion of beta-barrel proteins into the outer membrane. May have a structural role in maintaining the cell envelope integrity. This Pseudomonas fluorescens protein is Outer membrane protein assembly factor BamE.